The chain runs to 84 residues: U8-theraphotoxin-Hhn1g (84 aa).

The N-terminal stretch at 1–21 is a signal peptide; it reads MKVVLLVCLVWMMAMMELVSC. Cystine bridges form between Cys23/Cys35, Cys29/Cys44, Cys34/Cys67, Cys54/Cys75, and Cys69/Cys81.

It belongs to the AVIT (prokineticin) family. In terms of tissue distribution, expressed by the venom gland.

It localises to the secreted. The polypeptide is U8-theraphotoxin-Hhn1g (Cyriopagopus hainanus (Chinese bird spider)).